Consider the following 337-residue polypeptide: Probable arabinose 5-phosphate isomerase (337 aa).

Residues 58–201 (VIDLILACEG…AVSLITARNF (144 aa)) enclose the SIS domain. Substrate is bound by residues 92–93 (GT), histidine 99, histidine 105, 131–140 (KLIPSLKNFG), 165–167 (TVE), threonine 237, and aspartate 290. Histidine 99 contributes to the Zn(2+) binding site. The 58-residue stretch at 227–284 (MQTRLPTILPTTNFTDCLTVMNEGRMGVALVMENEQLKGIITDGDIRRALTANGAGTL) folds into the CBS 1 domain. The CBS 2 domain occupies 292–337 (MTSSPKTIHQDEFLSKAEDFMKAKKIHSLVVVNDENHVVGLVEFSS).

Belongs to the SIS family. GutQ/KpsF subfamily.

It catalyses the reaction D-arabinose 5-phosphate = D-ribulose 5-phosphate. In terms of biological role, catalyzes the reversible aldol-ketol isomerization between D-ribulose 5-phosphate (Ru5P) and D-arabinose 5-phosphate (A5P). This is Probable arabinose 5-phosphate isomerase from Haemophilus influenzae (strain ATCC 51907 / DSM 11121 / KW20 / Rd).